A 659-amino-acid polypeptide reads, in one-letter code: Cysteine-rich receptor-like protein kinase 18 (659 aa).

A signal peptide spans 1 to 27; that stretch reads MATKSCELVLCFFVFFVISFSAISVSA. Gnk2-homologous domains follow at residues 28-131 and 137-250; these read QTCD…NRPF and MDPL…VYPF. The Extracellular segment spans residues 28–287; the sequence is QTCDNTTGTF…KNDSRISGGK (260 aa). N-linked (GlcNAc...) asparagine glycans are attached at residues asparagine 32, asparagine 57, asparagine 152, asparagine 162, asparagine 179, asparagine 180, asparagine 197, asparagine 275, and asparagine 279. A helical transmembrane segment spans residues 288–308; sequence IAAIVVVTVVTIILVVLGFVI. Residues 309-659 are Cytoplasmic-facing; sequence SNRRKQKQEM…EATITDVNPR (351 aa). A Protein kinase domain is found at 339–611; the sequence is FSERNKLGKG…PTMSTIHQML (273 aa). ATP is bound by residues 345 to 353 and lysine 367; that span reads LGKGGFGEV. Tyrosine 412 carries the post-translational modification Phosphotyrosine. Aspartate 464 functions as the Proton acceptor in the catalytic mechanism. Serine 468 bears the Phosphoserine mark. Threonine 504 is subject to Phosphothreonine. Tyrosine 512 is subject to Phosphotyrosine.

The protein belongs to the protein kinase superfamily. Ser/Thr protein kinase family. CRK subfamily.

The protein resides in the membrane. The catalysed reaction is L-seryl-[protein] + ATP = O-phospho-L-seryl-[protein] + ADP + H(+). The enzyme catalyses L-threonyl-[protein] + ATP = O-phospho-L-threonyl-[protein] + ADP + H(+). This chain is Cysteine-rich receptor-like protein kinase 18 (CRK18), found in Arabidopsis thaliana (Mouse-ear cress).